The sequence spans 424 residues: MDSGPLWDANPTPRGTLSAPNATTPWLGRDEELAKVEIGVLATVLVLATGGNLAVLLTLGQLGRKRSRMHLFVLHLALTDLAVALFQVLPQLLWDITYRFQGPDLLCRAVKYLQVLSMFASTYMLLAMTLDRYLAVCHPLRSLQQPGQSTYLLIAAPWLLAAIFSLPQVFIFSLREVIQGSGVLDCWADFGFPWGPRAYLTWTTLAIFVLPVTMLTACYSLICHEICKNLKVKTQAWRVGGGGWRTWDRPSPSTLAATTRGLPSRVSSINTISRAKIRTVKMTFVIVLAYIACWAPFFSVQMWSVWDKNAPDEDSTNVAFTISMLLGNLNSCCNPWIYMGFNSHLLPRPLRHLACCGGPQPRMRRRLSDGSLSSRHTTLLTRSSCPATLSLSLSLTLSGRPRPEESPRDLELADGEGTAETIIF.

The tract at residues Met-1–Ala-22 is disordered. The Extracellular portion of the chain corresponds to Met-1 to Lys-35. The segment covering Pro-13–Ala-22 has biased composition (polar residues). Asn-21 is a glycosylation site (N-linked (GlcNAc...) asparagine). Residues Val-36–Leu-59 form a helical membrane-spanning segment. The Cytoplasmic portion of the chain corresponds to Gly-60–Leu-71. The helical transmembrane segment at Phe-72–Leu-93 threads the bilayer. The Extracellular portion of the chain corresponds to Trp-94–Arg-108. A disulfide bridge connects residues Cys-107 and Cys-186. A helical transmembrane segment spans residues Ala-109–Leu-130. At Asp-131–Tyr-151 the chain is on the cytoplasmic side. Residues Leu-152–Ser-173 traverse the membrane as a helical segment. Residues Leu-174 to Thr-201 are Extracellular-facing. The helical transmembrane segment at Trp-202–Ile-222 threads the bilayer. At Cys-223–Thr-283 the chain is on the cytoplasmic side. The chain crosses the membrane as a helical span at residues Phe-284–Trp-303. Topologically, residues Ser-304–Thr-321 are extracellular. Residues Ile-322–Phe-341 traverse the membrane as a helical segment. At Asn-342–Phe-424 the chain is on the cytoplasmic side. The interval Ser-398–Gly-417 is disordered. The segment covering Pro-401 to Glu-411 has biased composition (basic and acidic residues).

Belongs to the G-protein coupled receptor 1 family. Vasopressin/oxytocin receptor subfamily.

The protein resides in the cell membrane. Receptor for arginine vasopressin. The activity of this receptor is mediated by G proteins which activate a phosphatidyl-inositol-calcium second messenger system. In terms of biological role, (Microbial infection) During SARS coronavirus-2/SARS-CoV-2 infection, may recognize and internalize the complex formed by AVP/Arg-vasopressin, SARS-CoV-2 spike protein and secreted ACE2 through DNM2/dynamin 2-dependent endocytosis. The sequence is that of Vasopressin V1b receptor from Homo sapiens (Human).